Consider the following 1005-residue polypeptide: Band 4.1-like protein 2 (1005 aa).

Positions 1–80 (MTTEVGSVSE…SRGISRFIPP (80 aa)) are disordered. Position 2 is an N-acetylthreonine (threonine 2). Serine 7 carries the post-translational modification Phosphoserine. The segment covering 22 to 31 (ATKEKPKEVA) has biased composition (basic and acidic residues). Phosphoserine is present on residues serine 39, serine 58, and serine 87. Threonine 89 carries the phosphothreonine modification. Residues 93–196 (AKDGGDKKEP…GGAAKRETKE (104 aa)) are disordered. Composition is skewed to basic and acidic residues over residues 111-157 (VLDK…EKPS) and 169-196 (VSKEREEKVKETQEDKLEGGAAKRETKE). Residues lysine 140 and lysine 144 each participate in a glycyl lysine isopeptide (Lys-Gly) (interchain with G-Cter in SUMO2) cross-link. Serine 170, serine 208, serine 386, serine 402, serine 499, serine 550, serine 562, serine 575, serine 598, and serine 614 each carry phosphoserine. Residues 218 to 499 (VQCKVTLLDG…EHHTFYRLVS (282 aa)) enclose the FERM domain. The segment at 502–610 (QPPKAKFLTL…KAPHLQLIEG (109 aa)) is hydrophilic. The segment at 611-676 (KKNSLRVEGD…WEKRRITPLS (66 aa)) is spectrin--actin-binding. Tyrosine 623 is modified (phosphotyrosine). Residues serine 627 and serine 647 each carry the phosphoserine modification. The disordered stretch occupies residues 652-800 (KRNFMESTPE…EEAVPEASPV (149 aa)). Positions 675-686 (LSLQTQGSSHET) are enriched in polar residues. Positions 690–711 (VEEKKRAEVGKDERVITEEMNG) are enriched in basic and acidic residues. Phosphoserine is present on residues serine 715 and serine 718. Residues 734–746 (STSLSSESSSSSS) show a composition bias toward low complexity. Composition is skewed to basic and acidic residues over residues 754-770 (GEYRPHHRVTEGTIREE) and 780-793 (EPRPAAKVVEREEA). Position 763 is a phosphothreonine (threonine 763). At serine 828 the chain carries Phosphoserine. A C-terminal (CTD) region spans residues 855–1005 (HVDIDVLPQI…ETELAEEGED (151 aa)).

Interacts with FCGR1A. Interacts with TRPC4. Interacts (via CTD domain) with FKBP2. Interacts with NUMA1; this interaction is negatively regulated by CDK1 during metaphase and promotes anaphase-specific localization of NUMA1 in symmetrically dividing cells. In terms of tissue distribution, widely expressed.

Its subcellular location is the cytoplasm. The protein localises to the cytoskeleton. It is found in the cell cortex. The protein resides in the cell membrane. Functionally, required for dynein-dynactin complex and NUMA1 recruitment at the mitotic cell cortex during anaphase. The sequence is that of Band 4.1-like protein 2 from Homo sapiens (Human).